Reading from the N-terminus, the 156-residue chain is Small ribosomal subunit protein uS7 (156 aa).

The protein belongs to the universal ribosomal protein uS7 family. As to quaternary structure, part of the 30S ribosomal subunit. Contacts proteins S9 and S11.

One of the primary rRNA binding proteins, it binds directly to 16S rRNA where it nucleates assembly of the head domain of the 30S subunit. Is located at the subunit interface close to the decoding center, probably blocks exit of the E-site tRNA. The sequence is that of Small ribosomal subunit protein uS7 from Gloeothece citriformis (strain PCC 7424) (Cyanothece sp. (strain PCC 7424)).